The sequence spans 351 residues: Palmitoyltransferase spe-10 (351 aa).

Transmembrane regions (helical) follow at residues 21 to 43, 60 to 80, 198 to 218, and 241 to 261; these read TGWI…LWWS, IQAT…MWSL, YFLL…LTSL, and LFSF…LIIF. A DHHC domain is found at 154–204; that stretch reads KYCYECGHIKPDRARHCSSCGKCCIKYDHHCPWINMCVTHVNYKYFLLYII.

The protein belongs to the DHHC palmitoyltransferase family. Expressed during spermatogenesis in budding and budded spermatids.

It localises to the membrane. It catalyses the reaction L-cysteinyl-[protein] + hexadecanoyl-CoA = S-hexadecanoyl-L-cysteinyl-[protein] + CoA. Involved in spermatogenesis, specifically in the morphogenesis of fibrous body-membranous organelles (FB-MO), which are Golgi-derived organelles used for transporting sperm-specific components, in spermatocytes and in their localization into budding spermatids. Required for the proper formation of spermatids and spermatozoa. The chain is Palmitoyltransferase spe-10 from Caenorhabditis elegans.